Reading from the N-terminus, the 312-residue chain is Porphobilinogen deaminase (312 aa).

S-(dipyrrolylmethanemethyl)cysteine is present on C241.

It belongs to the HMBS family. In terms of assembly, monomer. Dipyrromethane is required as a cofactor.

The enzyme catalyses 4 porphobilinogen + H2O = hydroxymethylbilane + 4 NH4(+). Its pathway is porphyrin-containing compound metabolism; protoporphyrin-IX biosynthesis; coproporphyrinogen-III from 5-aminolevulinate: step 2/4. Its function is as follows. Tetrapolymerization of the monopyrrole PBG into the hydroxymethylbilane pre-uroporphyrinogen in several discrete steps. This Pelotomaculum thermopropionicum (strain DSM 13744 / JCM 10971 / SI) protein is Porphobilinogen deaminase.